Here is a 383-residue protein sequence, read N- to C-terminus: Succinyl-diaminopimelate desuccinylase (383 aa).

H79 lines the Zn(2+) pocket. D81 is a catalytic residue. D110 contributes to the Zn(2+) binding site. E141 functions as the Proton acceptor in the catalytic mechanism. E142, E170, and H355 together coordinate Zn(2+).

This sequence belongs to the peptidase M20A family. DapE subfamily. Homodimer. Zn(2+) serves as cofactor. The cofactor is Co(2+).

It carries out the reaction N-succinyl-(2S,6S)-2,6-diaminopimelate + H2O = (2S,6S)-2,6-diaminopimelate + succinate. It functions in the pathway amino-acid biosynthesis; L-lysine biosynthesis via DAP pathway; LL-2,6-diaminopimelate from (S)-tetrahydrodipicolinate (succinylase route): step 3/3. In terms of biological role, catalyzes the hydrolysis of N-succinyl-L,L-diaminopimelic acid (SDAP), forming succinate and LL-2,6-diaminopimelate (DAP), an intermediate involved in the bacterial biosynthesis of lysine and meso-diaminopimelic acid, an essential component of bacterial cell walls. The protein is Succinyl-diaminopimelate desuccinylase of Helicobacter pylori (strain HPAG1).